We begin with the raw amino-acid sequence, 214 residues long: Small ribosomal subunit protein uS5 (214 aa).

Residues 1–61 (MTDSSPQSNP…QERDSEWQER (61 aa)) are disordered. A compositionally biased stretch (low complexity) spans 9-29 (NPNAVPGAADVPAAAEGQQQQ). Over residues 30-60 (EQRRGRGDRDGRRGDRRGGRRGQERDSEWQE) the composition is skewed to basic and acidic residues. The S5 DRBM domain occupies 58–121 (WQERVVQIRR…ADGKKHLVKV (64 aa)).

It belongs to the universal ribosomal protein uS5 family. In terms of assembly, part of the 30S ribosomal subunit. Contacts proteins S4 and S8.

In terms of biological role, with S4 and S12 plays an important role in translational accuracy. Its function is as follows. Located at the back of the 30S subunit body where it stabilizes the conformation of the head with respect to the body. This Synechococcus sp. (strain CC9605) protein is Small ribosomal subunit protein uS5.